The following is a 318-amino-acid chain: Small ribosomal subunit biogenesis GTPase RsgA (318 aa).

Over residues M1 to A16 the composition is skewed to basic residues. Positions M1 to H21 are disordered. A CP-type G domain is found at S84–F249. Residues N133 to D136 and G187 to S195 each bind GTP. Residues C273, C278, H280, and C286 each coordinate Zn(2+).

Belongs to the TRAFAC class YlqF/YawG GTPase family. RsgA subfamily. Monomer. Associates with 30S ribosomal subunit, binds 16S rRNA. The cofactor is Zn(2+).

The protein resides in the cytoplasm. One of several proteins that assist in the late maturation steps of the functional core of the 30S ribosomal subunit. Helps release RbfA from mature subunits. May play a role in the assembly of ribosomal proteins into the subunit. Circularly permuted GTPase that catalyzes slow GTP hydrolysis, GTPase activity is stimulated by the 30S ribosomal subunit. The polypeptide is Small ribosomal subunit biogenesis GTPase RsgA (Ralstonia nicotianae (strain ATCC BAA-1114 / GMI1000) (Ralstonia solanacearum)).